A 119-amino-acid polypeptide reads, in one-letter code: Methylglyoxal synthase (119 aa).

One can recognise an MGS-like domain in the interval 1–119; the sequence is MRIALIAHDK…GTADLIIRQF (119 aa). Substrate-binding positions include histidine 8, lysine 12, 34–37, and 54–55; these read TGTT and SG. Aspartate 60 serves as the catalytic Proton donor/acceptor. Position 87 (histidine 87) interacts with substrate.

It belongs to the methylglyoxal synthase family.

The catalysed reaction is dihydroxyacetone phosphate = methylglyoxal + phosphate. In terms of biological role, catalyzes the formation of methylglyoxal from dihydroxyacetone phosphate. This is Methylglyoxal synthase from Clostridium botulinum (strain Alaska E43 / Type E3).